Consider the following 104-residue polypeptide: Pyrimidine/purine nucleoside phosphorylase (104 aa).

It belongs to the nucleoside phosphorylase PpnP family.

The catalysed reaction is a purine D-ribonucleoside + phosphate = a purine nucleobase + alpha-D-ribose 1-phosphate. The enzyme catalyses adenosine + phosphate = alpha-D-ribose 1-phosphate + adenine. It carries out the reaction cytidine + phosphate = cytosine + alpha-D-ribose 1-phosphate. It catalyses the reaction guanosine + phosphate = alpha-D-ribose 1-phosphate + guanine. The catalysed reaction is inosine + phosphate = alpha-D-ribose 1-phosphate + hypoxanthine. The enzyme catalyses thymidine + phosphate = 2-deoxy-alpha-D-ribose 1-phosphate + thymine. It carries out the reaction uridine + phosphate = alpha-D-ribose 1-phosphate + uracil. It catalyses the reaction xanthosine + phosphate = alpha-D-ribose 1-phosphate + xanthine. Functionally, catalyzes the phosphorolysis of diverse nucleosides, yielding D-ribose 1-phosphate and the respective free bases. Can use uridine, adenosine, guanosine, cytidine, thymidine, inosine and xanthosine as substrates. Also catalyzes the reverse reactions. This Geotalea daltonii (strain DSM 22248 / JCM 15807 / FRC-32) (Geobacter daltonii) protein is Pyrimidine/purine nucleoside phosphorylase.